Consider the following 321-residue polypeptide: Cyclic AMP-AMP-AMP synthase (321 aa).

An ATP-binding site is contributed by Lys-63. Mg(2+) contacts are provided by Asp-72 and Asp-74. Residues Asp-74, His-162, Lys-185, Lys-201–Phe-203, and Asn-270 each bind ATP.

This sequence belongs to the CD-NTase family. A01 subfamily. In terms of assembly, forms complexes with Cap7 with 1:1 and 2:2 stoichimetry, and a 1:1:6 CdnC:Cap7:Cap6 complex. The cofactor is Mg(2+).

It carries out the reaction 3 ATP = 3',3',3'-c-tri-AMP + 3 diphosphate. It catalyses the reaction 2 ATP = 3',3'-c-di-AMP + 2 diphosphate. With respect to regulation, the 2:2 CdnC:Cap7 (Cap7 is also called HORMA) complex is activated for cAAA synthesis by long dsDNA, but not 40 bp dsDNA or ssDNA; the 1:1 complex is inactive in vitro. The 2:2:DNA complex is catalytically disassembled and inactivated by Cap6 (also called Trip13). Its function is as follows. Cyclic nucleotide synthase (second messenger synthase) of a CBASS antivirus system. CBASS (cyclic oligonucleotide-based antiphage signaling system) provides immunity against bacteriophage. The CD-NTase protein synthesizes cyclic nucleotides in response to infection; these serve as specific second messenger signals. The signals activate a diverse range of effectors, leading to bacterial cell death and thus abortive phage infection. A type III-C(AAA) CBASS system. Cyclic nucleotide synthase that upon activation catalyzes the synthesis of 3',3',3'-cyclic AMP-AMP-AMP (3',3',3'-c-tri-AMP or cAAA) as the major product, and 3',3'-c-di-AMP as a minor product. Cannot use GTP as a substrate. Functionally, protects E.coli strain JP313 against bacteriophage lambda cI- infection. When the cdnC-cap7-cap6-nucC operon is transformed into a susceptible strain it confers bacteriophage immunity. Mutations in the sensor (Cap7 also called HORMA) or effector proteins (CdnC, NucC) but not the disassembly protein (Cap6 also called Trip13) no longer confer immunity. The presence of the intact operon leads to culture collapse and cell death, which occurs before the phage has finished its replication cycle, thus protecting non-infected bacteria by aborting the phage infection and preventing its propagation. The sequence is that of Cyclic AMP-AMP-AMP synthase from Escherichia coli (strain MS 115-1).